The primary structure comprises 437 residues: Enolase superfamily member DDB_G0284701 (437 aa).

Lys217 serves as the catalytic Proton acceptor. Positions 251, 279, and 321 each coordinate Mn(2+). Asp395 functions as the Proton donor in the catalytic mechanism.

It belongs to the mandelate racemase/muconate lactonizing enzyme family.

The polypeptide is Enolase superfamily member DDB_G0284701 (Dictyostelium discoideum (Social amoeba)).